The sequence spans 133 residues: Ribosome-binding factor A (133 aa).

The protein belongs to the RbfA family. In terms of assembly, monomer. Binds 30S ribosomal subunits, but not 50S ribosomal subunits or 70S ribosomes.

The protein resides in the cytoplasm. In terms of biological role, one of several proteins that assist in the late maturation steps of the functional core of the 30S ribosomal subunit. Associates with free 30S ribosomal subunits (but not with 30S subunits that are part of 70S ribosomes or polysomes). Required for efficient processing of 16S rRNA. May interact with the 5'-terminal helix region of 16S rRNA. The protein is Ribosome-binding factor A of Cytophaga hutchinsonii (strain ATCC 33406 / DSM 1761 / CIP 103989 / NBRC 15051 / NCIMB 9469 / D465).